We begin with the raw amino-acid sequence, 1003 residues long: MSNVPLATKTIRKLSNRKYEIKIYLKDENTCFERVVDMVVPLYDVCNETSGVTLESCSPNIEVIELDNTHVRIKVHGDTLKEMCFELLFPCNVNEAQVWKYVSRLLLDNVSHNDVKYKLANFRLTLNGKHLKLKEIDQPLFIYFVDDLGNYGLITKENIQNNNLQVNKDASFITIFPQYAYICLGRKVYLNEKVTFDVTTDATNITLDFNKSVNIAVSFLDIYYEVNNNEQKDLLKDLLKRYGEFEVYNADTGLIYAKNLSIKNYDTVIQVERLPVNLKVRAYTKDENGRNLCLMKITSSTEVDPEYVTSNNALLGTLRVYKKFDKSHLKIVMHNRGSGNVFPLRSLYLELSNVKGYPVKASDTSRLDVGIYKLNKIYVDNDENKIILEEIEAEYRCGRQVFHERVKLNKHQCKYTPKCPFQFVVNSPDTTIHLYGISNVCLKPKVPKNLRLWGWILDCDTSRFIKHMADGSDDLDLDVRLNRNDICLKQAIKQHYTNVIILEYANTYPNCTLSLGNNRFNNVFDMNDNKTISEYTNFTKSRQDLNNMSCILGINIGNSVNISSLPGWVTPHEAKILRSGCARVREFCKSFCDLSNKRFYAMARDLVSLLFMCNYVNIEINEAVCEYPGYVILFARAIKVINDLLLINGVDNLAGYSISLPIHYGSTEKTLPNEKYGGVDKKFKYLFLKNKLKDLMRDADFVQPPLYISTYFRTLLDAPPTDNYEKYLVDSSVQSQDVLQGLLNTCNTIDTNARVASSVIGYVYEPCGTSEHKIGSEALCKMAKEASRLGNLGLVNRINESNYNKCNKYGYRGVYENNKLKTKYYREIFDCNPNNNNELISRYGYRIMDLHKIGEIFANYDESESPCERRCHYLEDRGLLYGPEYVHHRYQESCTPNTFGNNTNCVTRNGEQHVYENSCGDNATCGRRTGYGRRSRDEWNDYRKPHVYDNCADANSSSSDSCSDSSSSSESESDSDGCCDTDASLDSDIENCYQNPSKCDAGC.

The residue at position 2 (Ser2) is an N-acetylserine; by host. Over residues 953 to 970 (DANSSSSDSCSDSSSSSE) the composition is skewed to low complexity. The interval 953–979 (DANSSSSDSCSDSSSSSESESDSDGCC) is disordered.

As to quaternary structure, may form disulfide-bond-linked aggregates.

In terms of biological role, major component of viral occlusion bodies, the protective complexes in which the virions are embedded in the cytoplasm of their insect hosts. This chain is Spheroidin, found in Amsacta (AmEPV).